Reading from the N-terminus, the 258-residue chain is Histidine/lysine/arginine/ornithine transport ATP-binding protein HisP (258 aa).

The 247-residue stretch at 7 to 253 folds into the ABC transporter domain; sequence LHVIDLHKRY…PQSPRLQQFL (247 aa). 6 residues coordinate ATP: Ser-41, Gly-42, Gly-44, Lys-45, Ser-46, and Thr-47.

This sequence belongs to the ABC transporter superfamily. In terms of assembly, the HisPMQJ complex is composed of two ATP-binding proteins (HisP), two transmembrane proteins (HisM and HisQ) and a solute-binding protein (HisJ). The HisPMQ-ArgT complex is composed of two ATP-binding proteins (HisP), two transmembrane proteins (HisM and HisQ) and a solute-binding protein (ArgT).

Its subcellular location is the cell inner membrane. The catalysed reaction is a polar amino acid(out) + ATP + H2O = a polar amino acid(in) + ADP + phosphate + H(+). It catalyses the reaction L-histidine(out) + ATP + H2O = L-histidine(in) + ADP + phosphate + H(+). It carries out the reaction L-lysine(out) + ATP + H2O = L-lysine(in) + ADP + phosphate + H(+). The enzyme catalyses L-arginine(out) + ATP + H2O = L-arginine(in) + ADP + phosphate + H(+). The catalysed reaction is L-ornithine(out) + ATP + H2O = L-ornithine(in) + ADP + phosphate + H(+). Its activity is regulated as follows. Isolated, soluble HisP has a very low ATPase activity. ATPase activity is slightly increased in the presence of HisM and HisQ, and strongly increased when HisJ is also present. Functionally, part of the ABC transporter complex HisPMQJ involved in histidine transport. Is also part of the ABC transporter complex HisPMQ-ArgT involved in lysine/arginine/ornithine transport. Shows ATPase activity. Responsible for energy coupling to the transport system. This is Histidine/lysine/arginine/ornithine transport ATP-binding protein HisP from Salmonella typhimurium (strain LT2 / SGSC1412 / ATCC 700720).